A 407-amino-acid chain; its full sequence is Deacetylase Atu3266 (407 aa).

Zn(2+) is bound by residues H75, H77, K173, H206, H229, and D289. K173 carries the N6-carboxylysine modification.

It belongs to the metallo-dependent hydrolases superfamily. Atu3266/EF_0837 deacetylase family. In terms of assembly, homohexamer, dimer of trimers. Zn(2+) serves as cofactor.

Its function is as follows. Esterase that catalyzes the deacetylation of acetyl-(R)-mandelate (in vitro). Can also hydrolyze acetyl glycolate, but with lower efficiency. Has very low N-acetyl-D-amino acid deacetylase activity with N-acetyl-D-serine and N-acetyl-D-threonine (in vitro). Theoretical substrate docking studies suggest that other N-acetylated amino acids may optimally occupy the active site and may in fact be the physiological substrates. This is Deacetylase Atu3266 from Agrobacterium fabrum (strain C58 / ATCC 33970) (Agrobacterium tumefaciens (strain C58)).